The primary structure comprises 185 residues: Potassium-transporting ATPase KdpC subunit (185 aa).

The chain crosses the membrane as a helical span at residues 14–34 (ALSLLTGVAYPLALTGIAAVI).

It belongs to the KdpC family. As to quaternary structure, the system is composed of three essential subunits: KdpA, KdpB and KdpC.

It is found in the cell inner membrane. Functionally, part of the high-affinity ATP-driven potassium transport (or Kdp) system, which catalyzes the hydrolysis of ATP coupled with the electrogenic transport of potassium into the cytoplasm. This subunit acts as a catalytic chaperone that increases the ATP-binding affinity of the ATP-hydrolyzing subunit KdpB by the formation of a transient KdpB/KdpC/ATP ternary complex. The protein is Potassium-transporting ATPase KdpC subunit of Cereibacter sphaeroides (strain ATCC 17023 / DSM 158 / JCM 6121 / CCUG 31486 / LMG 2827 / NBRC 12203 / NCIMB 8253 / ATH 2.4.1.) (Rhodobacter sphaeroides).